Here is a 518-residue protein sequence, read N- to C-terminus: Circadian clock oscillator protein KaiC (518 aa).

Residues 1-247 (MTNLPEHQSS…FTINNGINIF (247 aa)) form the KaiC 1 domain. Ser49, Gly50, Thr51, Gly52, Lys53, Thr54, and Leu55 together coordinate ATP. Residue Thr54 coordinates Mg(2+). The active-site Proton acceptor in CI (KaiC 1) is the Glu78. Ser90 is a binding site for ATP. The interval 116 to 123 (QEVAGDFD) is B-loop, required to bind KaiB and SasA. Residues Lys225, Leu226, Arg227, Thr229, and His231 each coordinate ATP. Residues 248-260 (PLGAMRLTQRSSN) are linker. The region spanning 261-518 (VRVSSGVKTL…AKGMQDLESE (258 aa)) is the KaiC 2 domain. Positions 290, 291, 292, 293, 294, 295, and 296 each coordinate ATP. A Mg(2+)-binding site is contributed by Thr295. Mg(2+) is bound at residue Glu318. Glu318 (proton acceptor in CII (KaiC 2)) is an active-site residue. Trp331 is an ATP binding site. Ser431 bears the Phosphoserine; by autocatalysis mark. At Thr432 the chain carries Phosphothreonine; by autocatalysis. Residues Arg451, Lys457, Met458, Arg459, Ser461, His463, and Lys465 each contribute to the ATP site. Residues 488–497 (GIISGTPTRI) form an A-loop, interacts with KaiA region.

The protein belongs to the KaiC family. As to quaternary structure, homohexamer resembling 2 stacked donuts rings with a central pore nearly blocked on one side; hexamerization is dependent on ATP-binding. Binds 2 ATP per monomer, at the subunit interface on each ring. The KaiABC complex composition changes during the circadian cycle to control KaiC phosphorylation. Complexes KaiC(6), KaiA(2-4):KaiC(6), KaiB(6):KaiC(6) and KaiC(6):KaiB(6):KaiA(12) are among the most important forms, many form cooperatively. Interacts with SasA, probably as 1 SasA trimer:1 KaiC homohexamer, has highest affinity for unphosphorylated SasA. The CI domain binds to KaiB and SasA; as they have a similar fold they compete for the same site on CI. KaiB assumes a thioredoxin-like form called KaiB(fs) when bound to KaiC. Mg(2+) serves as cofactor. Post-translationally, phosphorylated on serine/threonine residues by autocatalysis. Both phosphorylated and unphosphorylated forms exist. Both autophosphorylates and autodephosphorylates. Phosphorylated form correlates with clock speed. Phosphorylated on serine and threonine residues by autocatalysis. Has a 4 step phosphorylation cycle; the autokinase acts first on Thr-432, then Ser-431. When Ser-431 is modified KaiC switches to an autophosphatase mode, acting first on phospho-Thr-432 then phospho-Ser-431.

It carries out the reaction L-seryl-[protein] + ATP = O-phospho-L-seryl-[protein] + ADP + H(+). The enzyme catalyses L-threonyl-[protein] + ATP = O-phospho-L-threonyl-[protein] + ADP + H(+). It catalyses the reaction ATP + H2O = ADP + phosphate + H(+). Its activity is regulated as follows. The interaction with KaiA enhances its phosphorylation status, while the interaction with KaiB decreases it. In terms of biological role, central component of the KaiABC oscillator complex, which constitutes the main circadian regulator in cyanobacteria. Complex composition changes during the circadian cycle to control KaiC phosphorylation. KaiA stimulates KaiC autophosphorylation, while KaiB sequesters KaiA, leading to KaiC autodephosphorylation. Clock output pathways impact the RpaA transcriptional regulator. KaiC enhances the autophosphorylation activity of SasA, which then transfers its phosphate group to RpaA to activate it. KaiB and KaiC together enhance the phospho-RpaA dephosphatase activity of CikA. Its function is as follows. Stimulates SasA autophosphorylation. Fully phosphorylated KaiC (tested with phosphomimetic Asp-431-432-Asp) is the best stimulant, requires the ATPase activity of the CII domain. Unphosphorylated SasA associates with KaiC and its autophosphorylation activity is enhanced. Phospho-SasA is released and associates with RpaA, transferring its phosphate group. Formation of the KaiA:KaiB complex is promoted by KaiC, helping switch KaiC from its autophosphorylation to autodephosphatase function. Functionally, has a weak, temperature-independent ATPase activity (about 14 molecules of ATP per day) that defines the circadian period. ATPase activity is mostly contributed by the CI domain; the CII domain augments the activity. The addition of KaiA increases activity. ATPase is inhibited during the KaiC phosphorylating phase and activated during the KaiC dephosphorylating phase. This Thermosynechococcus vestitus (strain NIES-2133 / IAM M-273 / BP-1) protein is Circadian clock oscillator protein KaiC.